A 387-amino-acid chain; its full sequence is S-adenosylmethionine synthase (387 aa).

Position 16 (histidine 16) interacts with ATP. Aspartate 18 lines the Mg(2+) pocket. Residue glutamate 44 coordinates K(+). Glutamate 57 and glutamine 100 together coordinate L-methionine. The interval 100–110 is flexible loop; it reads QSPDIAQGVDR. ATP contacts are provided by residues 167 to 169, 232 to 233, aspartate 241, 247 to 248, alanine 264, and lysine 268; these read DAK, RF, and RK. Aspartate 241 lines the L-methionine pocket. Lysine 272 serves as a coordination point for L-methionine.

Belongs to the AdoMet synthase family. In terms of assembly, homotetramer; dimer of dimers. The cofactor is Mg(2+). It depends on K(+) as a cofactor.

The protein resides in the cytoplasm. It carries out the reaction L-methionine + ATP + H2O = S-adenosyl-L-methionine + phosphate + diphosphate. It participates in amino-acid biosynthesis; S-adenosyl-L-methionine biosynthesis; S-adenosyl-L-methionine from L-methionine: step 1/1. Its function is as follows. Catalyzes the formation of S-adenosylmethionine (AdoMet) from methionine and ATP. The overall synthetic reaction is composed of two sequential steps, AdoMet formation and the subsequent tripolyphosphate hydrolysis which occurs prior to release of AdoMet from the enzyme. This is S-adenosylmethionine synthase from Cupriavidus necator (strain ATCC 17699 / DSM 428 / KCTC 22496 / NCIMB 10442 / H16 / Stanier 337) (Ralstonia eutropha).